Here is a 20-residue protein sequence, read N- to C-terminus: Fibrinogen beta chain (20 aa).

A compositionally biased stretch (acidic residues) spans 1-12 (IIDYYDEGEEDR). Positions 1-20 (IIDYYDEGEEDRDVGVVDAR) are disordered.

As to quaternary structure, heterohexamer; disulfide linked. Contains 2 sets of 3 non-identical chains (alpha, beta and gamma). The 2 heterotrimers are in head to head conformation with the N-termini in a small central domain. Post-translationally, conversion of fibrinogen to fibrin is triggered by thrombin, which cleaves fibrinopeptides A and B from alpha and beta chains, and thus exposes the N-terminal polymerization sites responsible for the formation of the soft clot.

The protein localises to the secreted. In terms of biological role, cleaved by the protease thrombin to yield monomers which, together with fibrinogen alpha (FGA) and fibrinogen gamma (FGG), polymerize to form an insoluble fibrin matrix. Fibrin has a major function in hemostasis as one of the primary components of blood clots. In addition, functions during the early stages of wound repair to stabilize the lesion and guide cell migration during re-epithelialization. Was originally thought to be essential for platelet aggregation, based on in vitro studies using anticoagulated blood. However subsequent studies have shown that it is not absolutely required for thrombus formation in vivo. Enhances expression of SELP in activated platelets. Maternal fibrinogen is essential for successful pregnancy. Fibrin deposition is also associated with infection, where it protects against IFNG-mediated hemorrhage. May also facilitate the antibacterial immune response via both innate and T-cell mediated pathways. The protein is Fibrinogen beta chain (FGB) of Felis catus (Cat).